The following is a 778-amino-acid chain: Mitochondrial intermediate peptidase (778 aa).

The N-terminal 37 residues, 1 to 37, are a transit peptide targeting the mitochondrion; it reads MIRTVTRPRQWQRWVYSSCLLQRAVPPAAARQQPRFT. H557 contacts Zn(2+). E558 is a catalytic residue. Zn(2+) contacts are provided by H561 and H564.

The protein belongs to the peptidase M3 family. It depends on Zn(2+) as a cofactor.

The protein localises to the mitochondrion matrix. The enzyme catalyses Release of an N-terminal octapeptide as second stage of processing of some proteins imported into the mitochondrion.. In terms of biological role, cleaves proteins, imported into the mitochondrion, to their mature size. While most mitochondrial precursor proteins are processed to the mature form in one step by mitochondrial processing peptidase (MPP), the sequential cleavage by MIP of an octapeptide after initial processing by MPP is a required step for a subgroup of nuclear-encoded precursor proteins destined for the matrix or the inner membrane. The protein is Mitochondrial intermediate peptidase (OCT1) of Chaetomium globosum (strain ATCC 6205 / CBS 148.51 / DSM 1962 / NBRC 6347 / NRRL 1970) (Soil fungus).